The chain runs to 440 residues: Phosphatidylcholine-sterol acyltransferase (440 aa).

The N-terminal stretch at 1 to 24 is a signal peptide; it reads MGPPGSPWQWVPLLLGLLLPPAAP. Asn44 is a glycosylation site (N-linked (GlcNAc...) asparagine). A disulfide bond links Cys74 and Cys98. Asn108 carries N-linked (GlcNAc...) asparagine glycosylation. Catalysis depends on Ser205, which acts as the Nucleophile. Asn296 carries N-linked (GlcNAc...) asparagine glycosylation. A disulfide bond links Cys337 and Cys380. Active-site charge relay system residues include Asp369 and His401. The N-linked (GlcNAc...) asparagine glycan is linked to Asn408.

This sequence belongs to the AB hydrolase superfamily. Lipase family. As to expression, most abundant in liver and cerebellum.

Its subcellular location is the secreted. It catalyses the reaction a sterol + a 1,2-diacyl-sn-glycero-3-phosphocholine = a sterol ester + a 1-acyl-sn-glycero-3-phosphocholine. APOA1 is the most potent activator in plasma. Also activated by APOE, APOC1 and APOA4. Its function is as follows. Central enzyme in the extracellular metabolism of plasma lipoproteins. Synthesized mainly in the liver and secreted into plasma where it converts cholesterol and phosphatidylcholines (lecithins) to cholesteryl esters and lysophosphatidylcholines on the surface of high and low density lipoproteins (HDLs and LDLs). The cholesterol ester is then transported back to the liver. Has a preference for plasma 16:0-18:2 or 18:O-18:2 phosphatidylcholines. Also produced in the brain by primary astrocytes, and esterifies free cholesterol on nascent APOE-containing lipoproteins secreted from glia and influences cerebral spinal fluid (CSF) APOE- and APOA1 levels. Together with APOE and the cholesterol transporter ABCA1, plays a key role in the maturation of glial-derived, nascent lipoproteins. Required for remodeling high-density lipoprotein particles into their spherical forms. The polypeptide is Phosphatidylcholine-sterol acyltransferase (LCAT) (Papio anubis (Olive baboon)).